Here is a 143-residue protein sequence, read N- to C-terminus: uncharacterized protein (143 aa).

It is found in the cytoplasm. The protein resides in the nucleus. This is an uncharacterized protein from Schizosaccharomyces pombe (strain 972 / ATCC 24843) (Fission yeast).